A 156-amino-acid chain; its full sequence is 6,7-dimethyl-8-ribityllumazine synthase (156 aa).

5-amino-6-(D-ribitylamino)uracil-binding positions include Phe-22, 57 to 59, and 81 to 83; these read AYE and TVI. Residue 86–87 coordinates (2S)-2-hydroxy-3-oxobutyl phosphate; the sequence is GT. The active-site Proton donor is His-89. Phe-114 provides a ligand contact to 5-amino-6-(D-ribitylamino)uracil. Arg-128 provides a ligand contact to (2S)-2-hydroxy-3-oxobutyl phosphate.

The protein belongs to the DMRL synthase family. In terms of assembly, forms an icosahedral capsid composed of 60 subunits, arranged as a dodecamer of pentamers.

It catalyses the reaction (2S)-2-hydroxy-3-oxobutyl phosphate + 5-amino-6-(D-ribitylamino)uracil = 6,7-dimethyl-8-(1-D-ribityl)lumazine + phosphate + 2 H2O + H(+). Its pathway is cofactor biosynthesis; riboflavin biosynthesis; riboflavin from 2-hydroxy-3-oxobutyl phosphate and 5-amino-6-(D-ribitylamino)uracil: step 1/2. Catalyzes the formation of 6,7-dimethyl-8-ribityllumazine by condensation of 5-amino-6-(D-ribitylamino)uracil with 3,4-dihydroxy-2-butanone 4-phosphate. This is the penultimate step in the biosynthesis of riboflavin. The sequence is that of 6,7-dimethyl-8-ribityllumazine synthase from Yersinia pseudotuberculosis serotype O:1b (strain IP 31758).